The sequence spans 229 residues: 3-dehydroquinate dehydratase (229 aa).

3-dehydroquinate-binding positions include 29 to 31 and arginine 56; that span reads ELR. The Proton donor/acceptor role is filled by histidine 120. The active-site Schiff-base intermediate with substrate is lysine 146. 3 residues coordinate 3-dehydroquinate: arginine 187, threonine 208, and glutamine 212.

This sequence belongs to the type-I 3-dehydroquinase family. Homodimer.

It carries out the reaction 3-dehydroquinate = 3-dehydroshikimate + H2O. It functions in the pathway metabolic intermediate biosynthesis; chorismate biosynthesis; chorismate from D-erythrose 4-phosphate and phosphoenolpyruvate: step 3/7. Its function is as follows. Involved in the third step of the chorismate pathway, which leads to the biosynthesis of aromatic amino acids. Catalyzes the cis-dehydration of 3-dehydroquinate (DHQ) and introduces the first double bond of the aromatic ring to yield 3-dehydroshikimate. This is 3-dehydroquinate dehydratase from Haloarcula marismortui (strain ATCC 43049 / DSM 3752 / JCM 8966 / VKM B-1809) (Halobacterium marismortui).